The primary structure comprises 269 residues: Auxin-responsive protein IAA26 (269 aa).

The span at 25 to 40 shows a compositional bias: basic and acidic residues; sequence YQEDKNNTDQEKKLEL. Disordered regions lie at residues 25–55 and 76–146; these read YQED…HSAI and CFNG…KQVE. Positions 38–42 match the EAR-like (transcriptional repression) motif; the sequence is LELRL. Polar residues-rich tracts occupy residues 80–93 and 117–136; these read NHFS…SVPH and LAST…GQIN. Residues 137–146 show a composition bias toward basic and acidic residues; sequence KSDDGEKQVE. A PB1 domain is found at 151–250; that stretch reads GMFVKINMDG…SVKRLRVIKS (100 aa).

This sequence belongs to the Aux/IAA family. As to quaternary structure, homodimers and heterodimers. Interacts with phytochrome A. Interacts with TPL.

The protein localises to the nucleus. Its function is as follows. Aux/IAA proteins are short-lived transcriptional factors that function as repressors of early auxin response genes at low auxin concentrations. Repression is thought to result from the interaction with auxin response factors (ARFs), proteins that bind to the auxin-responsive promoter element (AuxRE). Formation of heterodimers with ARF proteins may alter their ability to modulate early auxin response genes expression. The sequence is that of Auxin-responsive protein IAA26 (IAA26) from Arabidopsis thaliana (Mouse-ear cress).